We begin with the raw amino-acid sequence, 61 residues long: UPF0434 protein Pmen_1615 (61 aa).

Belongs to the UPF0434 family.

This is UPF0434 protein Pmen_1615 from Ectopseudomonas mendocina (strain ymp) (Pseudomonas mendocina).